A 373-amino-acid chain; its full sequence is Transcription factor bHLH87 (373 aa).

Residues 127–227 (SAESENREIT…GGSSNISFQH (101 aa)) form a disordered region. Basic and acidic residues predominate over residues 188-218 (PQDDSEKGGFKLIYDENQSKSKKPRTEKERG). Positions 275 to 324 (ISTDPQTVAARQRRERISEKIRVLQTLVPGGTKMDTASMLDEAANYLKFL) constitute a bHLH domain.

In terms of assembly, homodimer. Flowers.

It is found in the nucleus. This Arabidopsis thaliana (Mouse-ear cress) protein is Transcription factor bHLH87 (BHLH87).